A 142-amino-acid chain; its full sequence is Large ribosomal subunit protein uL11 (142 aa).

Belongs to the universal ribosomal protein uL11 family. Part of the ribosomal stalk of the 50S ribosomal subunit. Interacts with L10 and the large rRNA to form the base of the stalk. L10 forms an elongated spine to which L12 dimers bind in a sequential fashion forming a multimeric L10(L12)X complex. In terms of processing, one or more lysine residues are methylated.

Its function is as follows. Forms part of the ribosomal stalk which helps the ribosome interact with GTP-bound translation factors. The protein is Large ribosomal subunit protein uL11 of Liberibacter asiaticus (Citrus greening disease).